A 418-amino-acid chain; its full sequence is CinA-like protein (418 aa).

It belongs to the CinA family.

The sequence is that of CinA-like protein from Leptospira interrogans serogroup Icterohaemorrhagiae serovar copenhageni (strain Fiocruz L1-130).